The sequence spans 120 residues: NAD(P)H-quinone oxidoreductase subunit 3, chloroplastic (120 aa).

The next 3 membrane-spanning stretches (helical) occupy residues 9-29 (IFWA…FISG), 64-84 (MFAL…PWAM), and 88-108 (VLGV…IVGL).

This sequence belongs to the complex I subunit 3 family. As to quaternary structure, NDH is composed of at least 16 different subunits, 5 of which are encoded in the nucleus.

Its subcellular location is the plastid. It is found in the chloroplast thylakoid membrane. The enzyme catalyses a plastoquinone + NADH + (n+1) H(+)(in) = a plastoquinol + NAD(+) + n H(+)(out). It carries out the reaction a plastoquinone + NADPH + (n+1) H(+)(in) = a plastoquinol + NADP(+) + n H(+)(out). NDH shuttles electrons from NAD(P)H:plastoquinone, via FMN and iron-sulfur (Fe-S) centers, to quinones in the photosynthetic chain and possibly in a chloroplast respiratory chain. The immediate electron acceptor for the enzyme in this species is believed to be plastoquinone. Couples the redox reaction to proton translocation, and thus conserves the redox energy in a proton gradient. In Lactuca sativa (Garden lettuce), this protein is NAD(P)H-quinone oxidoreductase subunit 3, chloroplastic.